The following is a 365-amino-acid chain: Chorismate synthase (365 aa).

NADP(+) contacts are provided by arginine 48 and arginine 54. FMN contacts are provided by residues 131-133, 243-244, glycine 288, 303-307, and arginine 329; these read RSS, NA, and KPTSS.

The protein belongs to the chorismate synthase family. In terms of assembly, homotetramer. It depends on FMNH2 as a cofactor.

It carries out the reaction 5-O-(1-carboxyvinyl)-3-phosphoshikimate = chorismate + phosphate. Its pathway is metabolic intermediate biosynthesis; chorismate biosynthesis; chorismate from D-erythrose 4-phosphate and phosphoenolpyruvate: step 7/7. Functionally, catalyzes the anti-1,4-elimination of the C-3 phosphate and the C-6 proR hydrogen from 5-enolpyruvylshikimate-3-phosphate (EPSP) to yield chorismate, which is the branch point compound that serves as the starting substrate for the three terminal pathways of aromatic amino acid biosynthesis. This reaction introduces a second double bond into the aromatic ring system. The polypeptide is Chorismate synthase (Rhizobium etli (strain CIAT 652)).